Here is a 302-residue protein sequence, read N- to C-terminus: Lipooligosaccharide biosynthesis protein lex-1 (302 aa).

Tandem repeats lie at residues 42 to 45, 46 to 49, 50 to 53, 54 to 57, 58 to 61, 62 to 65, and 66 to 69. The tract at residues 42–69 is 7 X 4 AA tandem repeats of S-I-N-Q; the sequence is SINQSINQSINQSINQSINQSINQSINQ.

This sequence belongs to the glycosyltransferase 25 family.

In terms of biological role, involved in extracellular lipooligosaccharide (LOS) biosynthesis and virulence expression. Involved in the synthesis of the oligosaccharide moiety of the LOS molecule by adding GalNAc. This chain is Lipooligosaccharide biosynthesis protein lex-1 (lex1), found in Haemophilus influenzae (strain ATCC 51907 / DSM 11121 / KW20 / Rd).